The chain runs to 466 residues: Zinc finger protein ZIC 3 (466 aa).

Residues 65–80 are compositionally biased toward polar residues; it reads DLSSGQSSAFTPQGSG. A disordered region spans residues 65–103; that stretch reads DLSSGQSSAFTPQGSGYANALGHHHHHHHHHHASQVPTY. Positions 86 to 97 are enriched in basic residues; the sequence is GHHHHHHHHHHA. Residue lysine 247 forms a Glycyl lysine isopeptide (Lys-Gly) (interchain with G-Cter in SUMO2) linkage. The segment at 250 to 285 adopts a C2H2-type 1; atypical zinc-finger fold; sequence LSCKWIEEAQLSRPKKSCDRTFSTMHELVTHVTMEH. The C2H2-type 2; atypical zinc-finger motif lies at 294–321; it reads HVCYWEECPREGKSFKAKYKLVNHIRVH. 2 consecutive short sequence motifs (nuclear localization signal) follow at residues 296–321 and 329–351; these read CYWE…IRVH and CPFP…KRTH. 3 consecutive C2H2-type zinc fingers follow at residues 327–351, 357–381, and 387–409; these read FPCP…KRTH, FKCE…MHVH, and YICK…MKVH. Residues 403–466 form a disordered region; that stretch reads RKHMKVHESQ…LPPNFNEWYV (64 aa). The span at 411–427 shows a compositional bias: low complexity; the sequence is SQGSDSSPAASSGYESS. The segment covering 434–454 has biased composition (polar residues); sequence SANSKDTTKTPSAVQTSTSHN.

The protein belongs to the GLI C2H2-type zinc-finger protein family. Interacts with KPNA1 and KPNA6. Interacts (via C2H2-type domains 3, 4 and 5) with GLI3; the interaction enhances its transcriptional activity. Interacts (via the C2H2-type domains 3, 4 and 5) with MDFIC (via the C2H2-type domains 3, 4 and 5); the interaction reduces its transcriptional activity. CNS. A high level expression is seen in the cerebellum.

It is found in the nucleus. Its subcellular location is the cytoplasm. In terms of biological role, acts as a transcriptional activator. Required in the earliest stages in both axial midline development and left-right (LR) asymmetry specification. Binds to the minimal GLI-consensus sequence 5'-GGGTGGTC-3'. The polypeptide is Zinc finger protein ZIC 3 (Zic3) (Mus musculus (Mouse)).